The primary structure comprises 852 residues: MMAKSALRENGTNSETFRQRFRRFHYQEVAGPREAFSQLWELCCRWLRPEVRTKEQIVELLVLEQFLTVLPGEIQNWVQEQCPENGEEAVTLVEDLEREPGRPRSSVTVSVKGQEVRLEKMTPPKSSQELLSVRQESVEPQPRGVPKKERARSPDLGPQEQMNPKEKLKPFQRSGLPFPKSGVVSRLEQGEPWIPDLLGSKEKELPSGSHIGDRRVHADLLPSKKDRRSWVEQDHWSFEDEKVAGVHWGYEETRTLLAILSQTEFYEALRNCHRNSQVYGAVAERLREYGFLRTLEQCRTKFKGLQKSYRKVKSGHPPETCPFFEEMEALMSAQVIALPSNGLEAAASHSGLVGSDAETEEPGQRGWQHEEGAEEAVAQESDSDDMDLEATPQDPNSAAPVVFRSPGGVHWGYEETKTYLAILSETQFYEALRNCHRNSQLYGAVAERLWEYGFLRTPEQCRTKFKSLQTSYRKVKNGQAPETCPFFEEMDALVSVRVAAPPNDGQEETASCPVQGTSEAEAQKQAEEADEATEEDSDDDEEDTEIPPGAVITRAPVLFQSPRGFEAGFENEDNSKRDISEEVQLHRTLLARSERKIPRYLHQGKGNESDCRSGRQWAKTSGEKRGKLTLPEKSLSEVLSQQRPCLGERPYKYLKYSKSFGPNSLLMHQVSHQVENPYKCADCGKSFSRSARLIRHRRIHTGEKPYKCLDCGKSFRDSSNFITHRRIHTGEKPYQCGECGKCFNQSSSLIIHQRTHTGEKPYQCEECGKSFNNSSHFSAHRRIHTGERPHVCPDCGKSFSKSSDLRAHHRTHTGEKPYGCHDCGKCFSKSSALNKHGEIHAREKLLTQSAPK.

Residues 18 to 100 form the SCAN box domain; that stretch reads RQRFRRFHYQ…TLVEDLEREP (83 aa). 3 disordered regions span residues 96-182, 347-400, and 502-557; these read LERE…PKSG, ASHS…SAAP, and PNDG…RAPV. A Glycyl lysine isopeptide (Lys-Gly) (interchain with G-Cter in SUMO2) cross-link involves residue Lys-112. Phosphoserine is present on Ser-153. Lys-180 is covalently cross-linked (Glycyl lysine isopeptide (Lys-Gly) (interchain with G-Cter in SUMO2)). A compositionally biased stretch (polar residues) spans 508–517; sequence ETASCPVQGT. The span at 528-545 shows a compositional bias: acidic residues; sequence EADEATEEDSDDDEEDTE. Residue Ser-561 is modified to Phosphoserine. A Glycyl lysine isopeptide (Lys-Gly) (interchain with G-Cter in SUMO2) cross-link involves residue Lys-576. The interval 603-625 is disordered; it reads QGKGNESDCRSGRQWAKTSGEKR. A Glycyl lysine isopeptide (Lys-Gly) (interchain with G-Cter in SUMO2) cross-link involves residue Lys-652. C2H2-type zinc fingers lie at residues 678–700, 706–728, 734–756, 762–784, 790–812, and 818–840; these read YKCADCGKSFSRSARLIRHRRIH, YKCLDCGKSFRDSSNFITHRRIH, YQCGECGKCFNQSSSLIIHQRTH, YQCEECGKSFNNSSHFSAHRRIH, HVCPDCGKSFSKSSDLRAHHRTH, and YGCHDCGKCFSKSSALNKHGEIH.

The protein belongs to the krueppel C2H2-type zinc-finger protein family.

Its subcellular location is the nucleus. Its function is as follows. May be involved in transcriptional regulation. This chain is Zinc finger and SCAN domain-containing protein 29 (ZSCAN29), found in Homo sapiens (Human).